The sequence spans 382 residues: Kelch domain-containing protein 3 (382 aa).

5 Kelch repeats span residues 25–77 (RVYS…PYMR), 88–138 (TVLL…VLGK), 139–189 (IMYI…TMLG), 191–249 (HMYV…GYNG), and 251–301 (LYIF…IVGD).

As to quaternary structure, component of a CRL2(KLHDC3) complex, also named ECS(KLHDC3) complex, composed of CUL2, Elongin BC (ELOB and ELOC), RBX1 and substrate-specific adapter KLHDC3. May form oligomers as a KLHDC3-ELOB-ELOC complex; this interaction is likely autoinhibitory for the E3 ligase complex.

It is found in the cytoplasm. It participates in protein modification; protein ubiquitination. In terms of biological role, substrate-recognition component of a Cul2-RING (CRL2) E3 ubiquitin-protein ligase complex of the DesCEND (destruction via C-end degrons) pathway, which recognizes a C-degron located at the extreme C terminus of target proteins, leading to their ubiquitination and degradation. The C-degron recognized by the DesCEND pathway is usually a motif of less than ten residues and can be present in full-length proteins, truncated proteins or proteolytically cleaved forms. The CRL2(KLHDC3) complex specifically recognizes proteins with a glycine (Gly) at the C-terminus, leading to their ubiquitination and degradation: recognizes the C-terminal -Arg-(Xaa)n-Arg-Gly, -Arg-(Xaa)n-Lys-Gly, and -Arg-(Xaa)n-Gln-Gly degrons. The CRL2(KLHDC3) complex mediates ubiquitination and degradation of truncated SELENOV and SEPHS2 selenoproteins produced by failed UGA/Sec decoding, which end with a glycine. May be involved in meiotic recombination process. The sequence is that of Kelch domain-containing protein 3 from Homo sapiens (Human).